Reading from the N-terminus, the 334-residue chain is Putative B3 domain-containing protein At3g49610 (334 aa).

2 disordered regions span residues 69–89 (ERRT…GSEK) and 133–178 (DEFE…KFDP). Composition is skewed to polar residues over residues 73-84 (LGSSPTKTNTLF) and 141-157 (KSPT…SCLM). Residues 161 to 173 (KRKRYQSSGKSKK) are compositionally biased toward basic residues. A DNA-binding region (TF-B3) is located at residues 229-334 (FNKLLRNDFL…GVLCFALEKE (106 aa)).

It localises to the nucleus. The chain is Putative B3 domain-containing protein At3g49610 from Arabidopsis thaliana (Mouse-ear cress).